The sequence spans 1737 residues: Intraflagellar transport protein osm-1 (1737 aa).

7 WD repeats span residues 14–53, 63–103, 110–150, 151–189, 191–229, 233–273, and 511–553; these read DGEA…KDRF, GKKS…NEKK, VQPS…SLYK, TDET…QSKI, TLQV…QQFD, QSEK…WDEG, and DQRS…EQVT. TPR repeat units follow at residues 700–737, 803–836, 848–881, 907–940, 979–1012, 1037–1070, and 1137–1170; these read NDTE…KTSY, SQLY…GKAI, VTLE…KKAV, TGYY…NDAI, HGRF…DDVL, RGDL…SDAY, and GTVH…ELAV.

This sequence belongs to the IFT172 family. In terms of assembly, component of the IFT complex B composed of at least che-2, che-13, dyf-1, dyf-3, dyf-6, dyf-11, dyf-13, ift-20, ift-74, ift-81, ifta-2, osm-1, osm-5 and osm-6. Expressed in amphid and phasmid chemosensory neurons, where it appears to concentrate at the base of the transition zones, which correspond to the basal bodies of motile and sensory cilia. Moves in the retrograde direction along cilia and dendrites, suggesting that it is retrieved from the distal endings of the cilia by a retrograde transport pathway that moves it along cilia and then dendrites, back to the neuronal cell body.

It is found in the cell projection. It localises to the cilium. Functionally, component of the intraflagellar transport (IFT) complex B required for transport of proteins in the motile cilium. May be required for ciliary entrance and transport of specific ciliary cargo proteins such as che-3 which are related to motility. Required for the maintenance and formation of chemosensory cilia that detect chemosensory cues. The polypeptide is Intraflagellar transport protein osm-1 (Caenorhabditis elegans).